A 549-amino-acid polypeptide reads, in one-letter code: Glucose-6-phosphate isomerase (549 aa).

N6-acetyllysine is present on residues K80, K228, and K234. Catalysis depends on E355, which acts as the Proton donor. Active-site residues include H386 and K514.

It belongs to the GPI family.

It localises to the cytoplasm. It carries out the reaction alpha-D-glucose 6-phosphate = beta-D-fructose 6-phosphate. The protein operates within carbohydrate biosynthesis; gluconeogenesis. It participates in carbohydrate degradation; glycolysis; D-glyceraldehyde 3-phosphate and glycerone phosphate from D-glucose: step 2/4. Its function is as follows. Catalyzes the reversible isomerization of glucose-6-phosphate to fructose-6-phosphate. This Escherichia fergusonii (strain ATCC 35469 / DSM 13698 / CCUG 18766 / IAM 14443 / JCM 21226 / LMG 7866 / NBRC 102419 / NCTC 12128 / CDC 0568-73) protein is Glucose-6-phosphate isomerase.